The following is a 740-amino-acid chain: 1,4-alpha-glucan branching enzyme GlgB (740 aa).

Catalysis depends on aspartate 419, which acts as the Nucleophile. The Proton donor role is filled by glutamate 472.

Belongs to the glycosyl hydrolase 13 family. GlgB subfamily. Monomer.

The catalysed reaction is Transfers a segment of a (1-&gt;4)-alpha-D-glucan chain to a primary hydroxy group in a similar glucan chain.. Its pathway is glycan biosynthesis; glycogen biosynthesis. Catalyzes the formation of the alpha-1,6-glucosidic linkages in glycogen by scission of a 1,4-alpha-linked oligosaccharide from growing alpha-1,4-glucan chains and the subsequent attachment of the oligosaccharide to the alpha-1,6 position. This Thiobacillus denitrificans (strain ATCC 25259 / T1) protein is 1,4-alpha-glucan branching enzyme GlgB.